A 425-amino-acid polypeptide reads, in one-letter code: Gamma-glutamyl phosphate reductase (425 aa).

This sequence belongs to the gamma-glutamyl phosphate reductase family.

Its subcellular location is the cytoplasm. It carries out the reaction L-glutamate 5-semialdehyde + phosphate + NADP(+) = L-glutamyl 5-phosphate + NADPH + H(+). It participates in amino-acid biosynthesis; L-proline biosynthesis; L-glutamate 5-semialdehyde from L-glutamate: step 2/2. Functionally, catalyzes the NADPH-dependent reduction of L-glutamate 5-phosphate into L-glutamate 5-semialdehyde and phosphate. The product spontaneously undergoes cyclization to form 1-pyrroline-5-carboxylate. The polypeptide is Gamma-glutamyl phosphate reductase (Aromatoleum aromaticum (strain DSM 19018 / LMG 30748 / EbN1) (Azoarcus sp. (strain EbN1))).